The sequence spans 189 residues: MRKIGIIGGTFDPPHYGHLLIANEVYHALDLEEVWFLPNQIPPHKQGRNITSIERRLHMLELATEAEEHFSICLEELSRKGPSYTYDTMLQLTKKYPDVQFHFIIGGDMVEYLPKWYNIEALLNLVTFVGVARPGYTLHTPYQITTVEIPEFAVSSSLLRERYKEKKTCKYLLPEKVQVYIERNGLYES.

Belongs to the NadD family.

The enzyme catalyses nicotinate beta-D-ribonucleotide + ATP + H(+) = deamido-NAD(+) + diphosphate. It participates in cofactor biosynthesis; NAD(+) biosynthesis; deamido-NAD(+) from nicotinate D-ribonucleotide: step 1/1. In terms of biological role, catalyzes the reversible adenylation of nicotinate mononucleotide (NaMN) to nicotinic acid adenine dinucleotide (NaAD). The protein is Probable nicotinate-nucleotide adenylyltransferase of Bacillus cereus (strain G9842).